The following is a 338-amino-acid chain: MSRQPILDIKGLRTVFRTRAREIVAVNDVDIVVNPGETVALVGESGSGKSVTSLSIMRLLARKVGFIDAGSIILRGKSGQTVDLAAIDEEAMRRIRGNDIGMVFQEPMTSLNPVYTIGDQIGEPLRVHRGTSRREALEAVVELLDRVGIPDARRRAGQYPHELSGGMRQRATIAMALICNPTLLIADEPTTALDVTIQAQILDLMQKLQSESGMGMLFVTHNLGVVAEIAQRVVVMYAGRIVESGPVKEVFRNPRHPYTMGLLRSMPRLGDATEMKRRGEKLNTIPGMVPGLANLPSGCAFAPRCSFAVEACHAAVPPLASVNEHHGSRCIRWQEIAA.

Residues 10-263 (KGLRTVFRTR…PRHPYTMGLL (254 aa)) enclose the ABC transporter domain. 43–50 (GESGSGKS) lines the ATP pocket.

The protein belongs to the ABC transporter superfamily. The complex is composed of two ATP-binding proteins (BOV_A0347 and BOV_A0348), two transmembrane proteins (BOV_A0350 and BOV_A0351) and a solute-binding protein (BOV_A0352).

Its subcellular location is the cell inner membrane. Functionally, probably part of an ABC transporter complex that could be involved in peptide import. Probably responsible for energy coupling to the transport system. The polypeptide is Putative peptide import ATP-binding protein BOV_A0348 (Brucella ovis (strain ATCC 25840 / 63/290 / NCTC 10512)).